An 86-amino-acid polypeptide reads, in one-letter code: Small ribosomal subunit protein uS15 (86 aa).

It belongs to the universal ribosomal protein uS15 family. Part of the 30S ribosomal subunit. Forms a bridge to the 50S subunit in the 70S ribosome, contacting the 23S rRNA.

One of the primary rRNA binding proteins, it binds directly to 16S rRNA where it helps nucleate assembly of the platform of the 30S subunit by binding and bridging several RNA helices of the 16S rRNA. Functionally, forms an intersubunit bridge (bridge B4) with the 23S rRNA of the 50S subunit in the ribosome. The sequence is that of Small ribosomal subunit protein uS15 from Vesicomyosocius okutanii subsp. Calyptogena okutanii (strain HA).